A 988-amino-acid chain; its full sequence is uncharacterized protein (988 aa).

A signal peptide spans 1–17; that stretch reads MIRLVFLFLLVVLSVEL. Residues 111–176 are disordered; the sequence is YQNPSTFPST…SKLNQKSSKS (66 aa). Residues 114-140 are compositionally biased toward low complexity; that stretch reads PSTFPSTTTASTTTSTTTMPPTYQTTT. N-linked (GlcNAc...) asparagine glycosylation is found at N247, N389, N529, and N601. The helical transmembrane segment at 690 to 710 threads the bilayer; it reads IMIFTIFSVLSALTCLMCMYL. The N-linked (GlcNAc...) asparagine glycan is linked to N720. A run of 6 helical transmembrane segments spans residues 721–741, 753–773, 784–804, 832–852, 864–884, and 891–911; these read LTAVTFLGLAFLSISAPAFII, LLFPIAISITIAPVFVKTVLI, VLIAFCIVLIQTVISTEWLLL, MILLSCSLIALLSLLSFIFAL, LMISILAILFETALYVSLPLI, and TVMATTILIFAFVALLLSHTG. Residues 966-988 form a disordered region; it reads RSEDTLRRNTSLYGTEGYELPTP. An N-linked (GlcNAc...) asparagine glycan is attached at N974.

It localises to the membrane. This is an uncharacterized protein from Caenorhabditis elegans.